Here is a 460-residue protein sequence, read N- to C-terminus: Argininosuccinate lyase (460 aa).

This sequence belongs to the lyase 1 family. Argininosuccinate lyase subfamily.

The protein resides in the cytoplasm. The enzyme catalyses 2-(N(omega)-L-arginino)succinate = fumarate + L-arginine. It functions in the pathway amino-acid biosynthesis; L-arginine biosynthesis; L-arginine from L-ornithine and carbamoyl phosphate: step 3/3. This chain is Argininosuccinate lyase, found in Limosilactobacillus fermentum (strain NBRC 3956 / LMG 18251) (Lactobacillus fermentum).